A 760-amino-acid polypeptide reads, in one-letter code: Transmembrane channel-like protein 1 (760 aa).

A disordered region spans residues 1 to 80 (MSPKKVQIKV…RRRRLKRGAE (80 aa)). Residues 1 to 182 (MSPKKVQIKV…KIKAIESQFG (182 aa)) are Cytoplasmic-facing. Residues 13 to 29 (KEDETEESSSEEEEEVE) show a composition bias toward acidic residues. The span at 30-39 (DKLPRRESLR) shows a compositional bias: basic and acidic residues. Residue Ser-37 is modified to Phosphoserine. At Thr-45 the chain carries Phosphothreonine. Residues 50–61 (NEDDPEPEPEDE) show a composition bias toward acidic residues. Ser-128 carries the phosphoserine modification. The chain crosses the membrane as a helical span at residues 183–220 (SSVASYFLFLRWMYGVNMVLFILTFSLIMLPEYLWGLP). At 221 to 271 (YGSLPRKTVPRAEEASAANFGVLYDFNGLAQYSVLFYGYYDNKRTIGWMNF) the chain is on the extracellular side. A helical membrane pass occupies residues 272 to 303 (RLPLSYFLVGIMCIGYSFLVVLKAMTKNIGDD). At 304–359 (GGGDDNTFNFSWKVFTSWDYLIGNPETADNKFNSITMNFKEAITEEKAAQVEENVH) the chain is on the cytoplasmic side. Ser-314 is modified (phosphoserine). Residues 360–390 (LIRFLRFLANFFVFLTLGGSGYLIFWAVKRS) traverse the membrane as a helical segment. Over 391–402 (QEFAQQDPDTLG) the chain is Extracellular. The residue at position 400 (Thr-400) is a Phosphothreonine. Residues 403-430 (WWEKNEMNMVMSLLGMFCPTLFDLFAEL) traverse the membrane as a helical segment. The Cytoplasmic segment spans residues 431 to 434 (EDYH). Residues 435 to 469 (PLIALKWLLGRIFALLLGNLYVFILALMDEINNKI) form a helical membrane-spanning segment. The Extracellular portion of the chain corresponds to 470–515 (EEEKLVKANITLWEANMIKAYNASFSENSTGPPFFVHPADVPRGPC). Residues 516 to 553 (WETMVGQEFVRLTVSDVLTTYVTILIGDFLRACFVRFC) traverse the membrane as a helical segment. At 554 to 572 (NYCWCWDLEYGYPSYTEFD) the chain is on the cytoplasmic side. A helical transmembrane segment spans residues 573 to 593 (ISGNVLALIFNQGMIWMGSFF). Residues 594–596 (APS) are Extracellular-facing. The chain crosses the membrane as a helical span at residues 597-619 (LPGINILRLHTSMYFQCWAVMCC). The Cytoplasmic segment spans residues 620-633 (NVPEARVFKASRSN). Residues 634–657 (NFYLGMLLLILFLSTMPVLYMIVS) form a helical membrane-spanning segment. At 658–700 (LPPSFDCGPFSGKNRMFEVIGETLEHDFPSWMAKILRQLSNPG) the chain is on the extracellular side. The helical transmembrane segment at 701–734 (LVIAVILVMVLAIYYLNATAKGQKAANLDLKKKM) threads the bilayer. The Cytoplasmic segment spans residues 735–760 (KMQALENKMRNKKMAAARAAAAAGRQ).

The protein belongs to the TMC family. In terms of assembly, forms the MET channel complosed of TMC dimer (TMC1 or TMC2), TMIE, TOMT, CIB (CIB2 or CIB3), LHFPL5 and PDH15. The interaction of TMC1 and TMC2 with TOMT is required for the transportation of TMC1/2 into the stereocilia of hair cells. Interacts (via N-terminus) with both isoforms CD1 and CD3 of PCDH15. Can form a heterodimer with TMC2, TMC5 or TMC7. As to expression, detected in fetal cochlea, and at low levels in placenta and testis.

Its subcellular location is the cell membrane. The enzyme catalyses Ca(2+)(in) = Ca(2+)(out). Pore-forming subunit of the mechanotransducer (MET) non-selective cation channel complex located at the tips of stereocilia of cochlear hair cells and that mediates sensory transduction in the auditory system. The MET complex is composed of two dimeric pore-forming ion-conducting transmembrane TMC (TMC1 or TMC2) subunits, and aided by several auxiliary proteins including LHFPL5, TMIE, CIB2/3 and TOMT, and the tip-link PCDH15. MET channel is activated by tension in the tip-link extending from the side wall of one stereocilium to the tip of the adjacent shorter stereocilium, where the channel is located. TMC1 MET channel is highly permeable to calcium and likely transports monovalent cations. Also involved in vestibular hair cells transduction current. This Homo sapiens (Human) protein is Transmembrane channel-like protein 1.